The chain runs to 1307 residues: CRISPR-associated endonuclease Cas12a (1307 aa).

Residues 1 to 35 form a WED-I (OBD-I) region; it reads MTQFEGFTNLYQVSKTLRFELIPQGKTLKHIQEQG. Residues 36 to 320 are REC1 (helical-I); it reads FIEEDKARND…SDRNTLSFIL (285 aa). A crRNA-binding site is contributed by 47–51; sequence YKELK. A coiled-coil region spans residues 74 to 106; it reads ENLSAAIDSYRKEKTEETRNALIEEQATYRNAI. Residues 175–176 and 307–310 contribute to the crRNA site; these read NR and KQIL. Residues 321 to 526 form a WED-II (helical-II) region; the sequence is EEFKSDEEVI…ARNYATKKPY (206 aa). The interval 527-598 is WED-II (OBD-I); the sequence is SVEKFKLNFQ…GFDKMYYDYF (72 aa). The segment at residues 599–607 is a DNA-binding region (PAM-binding on target DNA); it reads PDAAKMIPK. The tract at residues 599–718 is PI (LHD); the sequence is PDAAKMIPKC…EYYAELNPLL (120 aa). A WED-III (OBD-III) region spans residues 719-884; that stretch reads YHISFQRIAE…ITLNYQAANS (166 aa). Residue 752 to 761 participates in crRNA binding; the sequence is KGHHGKPNLH. A DNA-binding region (target DNA) is located at residues 780-783; it reads KLNG. His-800 (for pre-crRNA processing) is an active-site residue. 806-808 serves as a coordination point for crRNA; sequence MLN. Residues Lys-809 and Lys-860 each act as for pre-crRNA processing in the active site. Positions 885–940 are ruvC-I; sequence PSKFNQRVNAYLKEHPETPIIGIDRGERNLIYITVIDSTGKILEQRSLNTIQQFDY. Asp-908 functions as the For DNase activity of RuvC domain in the catalytic mechanism. The segment at 941-957 is bridge helix; that stretch reads QKKLDNREKERVAARQA. Positions 951–968 form a DNA-binding region, target DNA; it reads RVAARQAWSVVGTIKDLK. Positions 958–1066 are ruvC-II; it reads WSVVGTIKDL…TQSGFLFYVP (109 aa). Residue Glu-993 is the For DNase activity of RuvC domain of the active site. The target DNA DNA-binding region spans 1051–1053; sequence SFA. Residues 1067–1262 are nuclease domain; it reads APYTSKIDPL…FQNPEWPMDA (196 aa). Arg-1226 acts as the For DNase activity of nuclease domain in catalysis. Asp-1263 (for DNase activity of RuvC domain) is an active-site residue. The ruvC-III stretch occupies residues 1263–1307; it reads DANGAYHIALKGQLLLNHLKESKDLKLQNGISNQDWLAYIQELRN.

Belongs to the CRISPR-associated endonuclease Cas12a family. In terms of assembly, monomer. It depends on Mg(2+) as a cofactor.

It carries out the reaction Endonucleolytic cleavage to 5'-phosphodinucleotide and 5'-phosphooligonucleotide end-products.. It catalyses the reaction RNA = a 5'-hydroxy-ribonucleotide + n nucleoside-2',3'-cyclophosphates.. Its function is as follows. CRISPR (clustered regularly interspaced short palindromic repeat), is an adaptive immune system that provides protection against mobile genetic elements (viruses, transposable elements and conjugative plasmids). CRISPR clusters contain sequences complementary to antecedent mobile elements and target invading nucleic acids. CRISPR clusters are transcribed and processed into CRISPR RNA (crRNA). Recognizes a short motif in the CRISPR repeat sequences (the 5' PAM or protospacer adjacent motif, TTTN in this organism) to help distinguish self versus nonself, as targets within the bacterial CRISPR locus do not have PAMs. Has dsDNA endonuclease activity, results in staggered 4-base 5' overhangs 19 and 22 bases downstream of the PAM on the non-targeted and targeted strand respectively. Non-target strand cleavage by the RuvC domain is probably a prerequisite of target strand cleavage by the Nuc domain. Protects E.coli against plasmids and bacteriophage M13mp18, phage T4 with hydroxymethyl or unmodified (but not glycosylated) cytosines and to a lesser extent against lambda and VpaE1 phage. In this CRISPR system correct processing of pre-crRNA requires only this protein and the CRISPR locus. This Acidaminococcus sp. (strain BV3L6) protein is CRISPR-associated endonuclease Cas12a.